A 460-amino-acid polypeptide reads, in one-letter code: Retinoic acid receptor alpha (460 aa).

Residues 1 to 87 (MASNSSSCPT…PPPLPRIYKP (87 aa)) form a modulating region. The disordered stretch occupies residues 46 to 78 (HQLPVSGYSTPSPATVETQSTSSEEIVPSPPSP). The segment covering 52–69 (GYSTPSPATVETQSTSSE) has biased composition (polar residues). NR C4-type zinc fingers lie at residues 88-108 (CFVC…CEGC) and 124-148 (CHRD…LQKC). A DNA-binding region (nuclear receptor) is located at residues 88-153 (CFVCQDKSSG…RLQKCFEVGM (66 aa)). A hinge region spans residues 154–182 (SKESVRNDRNKKKKDVPKTECSESYIVTP). Residues 183–417 (EVEELIEKVR…PLIQEMLENS (235 aa)) form the NR LBD domain. Positions 408-416 (PLIQEMLEN) match the 9aaTAD motif. Positions 418–460 (EGMDTLGGQPGGPRTGGLGPPPGSCSPSLSPSSTRSSPATHSP) are disordered. Over residues 425–435 (GQPGGPRTGGL) the composition is skewed to gly residues. Over residues 442 to 460 (CSPSLSPSSTRSSPATHSP) the composition is skewed to low complexity.

Belongs to the nuclear hormone receptor family. NR1 subfamily. In terms of assembly, heterodimer; with an RXR molecule. Binds DNA preferentially as a RAR/RXR heterodimer. Ubiquitous.

The protein resides in the nucleus. Functionally, receptor for retinoic acid. Retinoic acid receptors bind as heterodimers to their target response elements in response to their ligands, all-trans or 9-cis retinoic acid, and regulate gene expression in various biological processes. The RAR/RXR heterodimers bind to the retinoic acid response elements (RARE) composed of tandem 5'-AGGTCA-3' sites known as DR1-DR5. Required for hindbrain patterning and appears to be required for skin development. This chain is Retinoic acid receptor alpha (RARA), found in Gallus gallus (Chicken).